A 441-amino-acid polypeptide reads, in one-letter code: Ribulose bisphosphate carboxylase large chain (441 aa).

Lys5 is subject to N6,N6,N6-trimethyllysine. 2 residues coordinate substrate: Asn114 and Thr164. Lys166 functions as the Proton acceptor in the catalytic mechanism. Lys168 lines the substrate pocket. The Mg(2+) site is built by Lys192, Asp194, and Glu195. Lys192 carries the N6-carboxylysine modification. The active-site Proton acceptor is His285. Substrate-binding residues include Arg286, His318, and Ser370.

It belongs to the RuBisCO large chain family. Type I subfamily. Heterohexadecamer of 8 large chains and 8 small chains; disulfide-linked. The disulfide link is formed within the large subunit homodimers. Mg(2+) serves as cofactor. In terms of processing, the disulfide bond which can form in the large chain dimeric partners within the hexadecamer appears to be associated with oxidative stress and protein turnover.

It is found in the plastid. The protein resides in the chloroplast. It catalyses the reaction 2 (2R)-3-phosphoglycerate + 2 H(+) = D-ribulose 1,5-bisphosphate + CO2 + H2O. It carries out the reaction D-ribulose 1,5-bisphosphate + O2 = 2-phosphoglycolate + (2R)-3-phosphoglycerate + 2 H(+). Its function is as follows. RuBisCO catalyzes two reactions: the carboxylation of D-ribulose 1,5-bisphosphate, the primary event in carbon dioxide fixation, as well as the oxidative fragmentation of the pentose substrate in the photorespiration process. Both reactions occur simultaneously and in competition at the same active site. The chain is Ribulose bisphosphate carboxylase large chain from Drosera dichrosepala (Rusty sundew).